The primary structure comprises 230 residues: MNENVIALDGPAGSGKSTVARQIAERIGFNYLDTGAFYRALTLYLFRLHGNSPNTESFADWVKTSEAERSLSDIRILCEFSAGKENRIFLNGEEVSLAIRTPEITREIKHIANRRIYRNFVNQELHSLAKLHKLIIDGRDIGTEVFPDAKFKFYLTASSKVRAERRFLQLQEQGIEADRDEIEKEIILRDKSDMEREIAPLYQANDAILIDTDILSKNSVISKILKILDR.

10 to 18 lines the ATP pocket; it reads GPAGSGKST.

Belongs to the cytidylate kinase family. Type 1 subfamily.

It is found in the cytoplasm. The enzyme catalyses CMP + ATP = CDP + ADP. The catalysed reaction is dCMP + ATP = dCDP + ADP. The polypeptide is Cytidylate kinase (Leptospira borgpetersenii serovar Hardjo-bovis (strain JB197)).